The chain runs to 385 residues: A-type ATP synthase subunit C (385 aa).

It belongs to the V-ATPase V0D/AC39 subunit family. As to quaternary structure, has multiple subunits with at least A(3), B(3), C, D, E, F, H, I and proteolipid K(x).

It localises to the cell membrane. Component of the A-type ATP synthase that produces ATP from ADP in the presence of a proton gradient across the membrane. This chain is A-type ATP synthase subunit C, found in Methanosphaera stadtmanae (strain ATCC 43021 / DSM 3091 / JCM 11832 / MCB-3).